The following is a 312-amino-acid chain: Olfactory receptor 2M3 (312 aa).

Residues 1–25 (MARENSTFNSDFILLGIFNHSPTHT) are Extracellular-facing. A glycan (N-linked (GlcNAc...) asparagine) is linked at N5. The chain crosses the membrane as a helical span at residues 26-49 (FLFFLVLAIFSVAFMGNSVMVLLI). Residues 50 to 57 (YLDTQLHT) lie on the Cytoplasmic side of the membrane. The helical transmembrane segment at 58–79 (PMYLLLSQLSLMDLMLICTTVP) threads the bilayer. Topologically, residues 80–100 (KMAFNYLSGSKSISMAGCATQ) are extracellular. A disulfide bridge links C97 with C189. The helical transmembrane segment at 101–120 (IFFYTSLLGSECFLLAVMAY) threads the bilayer. Over 121–139 (DRYTAICHPLRYTNLMSPK) the chain is Cytoplasmic. The chain crosses the membrane as a helical span at residues 140–158 (ICGLMTAFSWILGSTDGII). The Extracellular segment spans residues 159–195 (DVVATFSFSYCGSREIAHFFCDFPSLLILSCSDTSIF). The chain crosses the membrane as a helical span at residues 196–219 (EKILFICCIVMIVFPVAIIIASYA). The Cytoplasmic segment spans residues 220–236 (RVILAVIHMGSGEGRRK). Residues 237 to 259 (AFTTCSSHLLVVGMYYGAALFMY) form a helical membrane-spanning segment. Residues 260–272 (IRPTSDRSPTQDK) lie on the Extracellular side of the membrane. A helical transmembrane segment spans residues 273-292 (MVSVFYTILTPMLNPLIYSL). Topologically, residues 293 to 312 (RNKEVTRAFMKILGKGKSGE) are cytoplasmic.

It belongs to the G-protein coupled receptor 1 family.

It is found in the cell membrane. Its function is as follows. Odorant receptor. In Homo sapiens (Human), this protein is Olfactory receptor 2M3 (OR2M3).